A 212-amino-acid polypeptide reads, in one-letter code: Bcl-2-related ovarian killer protein (212 aa).

Phosphoserine is present on Ser7. Residues 15-45 (MDAFDRSPTDKELVAQAKALGREYVHARLLR) are interactions with ITPR1. Residues Lys25 and Lys32 each participate in a glycyl lysine isopeptide (Lys-Gly) (interchain with G-Cter in ubiquitin) cross-link. Positions 32 to 44 (KALGREYVHARLL) match the BH4 motif. The BH3 signature appears at 66 to 82 (VCAVLLRLGDELEMIRP). Positions 70–78 (LLRLGDELE) are nuclear export signal. The short motif at 112–131 (HIFSAGITWGKVVSLYAVAA) is the BH1 element. Glycyl lysine isopeptide (Lys-Gly) (interchain with G-Cter in ubiquitin) cross-links involve residues Lys159 and Lys176. The BH2 signature appears at 164–178 (WLRRRGGWTDVLKCV). A helical transmembrane segment spans residues 189 to 209 (WLVAALCSFGRFLKAAFFVLL).

The protein belongs to the Bcl-2 family. Monomer; positively regulates apoptotic process. Homodimer. Heterodimer. Oligomer; promoted by apoptotic stimuli and BH3-only proteins; mediates constitutive activation. Interacts (via BH4 domain) with ITPR1; enhances BOK expression and stabilization; limits apoptosis and prevents ubiquitination and then degradation; protects ITPR1 from proteolysis by CASP3 during apoptosis. Interacts with ITPR2 and ITPR3; binds most strongly to ITPR2, and barely to ITPR3; regulates their expression. Interacts with XPO1; translocates to the cytoplasm. Interacts with BNIP3; promotes oligomerization. In terms of processing, ubiquitinated by AMFR/gp78 E3 ubiquitin ligase complex; mediates degradation by ubiquitin-proteasome pathway in a VCP/p97-dependent manner; prevents from pro-apoptotic activity; promotes degradation of newly synthesized proteins that are not ITPR1 associated. In terms of tissue distribution, expressed mainly in oocytes; weak expression in granulosa cells of the developing follicles. In adult human ovaries, expressed in granulosa cells at all follicular stages, but expression in primordial/primary follicles granulosa cell is stronger than in secondary and antral follicles.

It is found in the mitochondrion membrane. It localises to the endoplasmic reticulum membrane. Its subcellular location is the mitochondrion inner membrane. The protein resides in the cytoplasm. The protein localises to the nucleus. It is found in the mitochondrion. It localises to the endoplasmic reticulum. Its subcellular location is the mitochondrion outer membrane. The protein resides in the early endosome membrane. The protein localises to the recycling endosome membrane. It is found in the nucleus outer membrane. It localises to the golgi apparatus. Its subcellular location is the cis-Golgi network membrane. The protein resides in the trans-Golgi network membrane. The protein localises to the membrane. Functionally, apoptosis regulator that functions through different apoptotic signaling pathways. Plays a roles as pro-apoptotic protein that positively regulates intrinsic apoptotic process in a BAX- and BAK1-dependent manner or in a BAX- and BAK1-independent manner. In response to endoplasmic reticulum stress promotes mitochondrial apoptosis through downstream BAX/BAK1 activation and positive regulation of PERK-mediated unfolded protein response. Activates apoptosis independently of heterodimerization with survival-promoting BCL2 and BCL2L1 through induction of mitochondrial outer membrane permeabilization, in a BAX- and BAK1-independent manner, in response to inhibition of ERAD-proteasome degradation system, resulting in cytochrome c release. In response to DNA damage, mediates intrinsic apoptotic process in a TP53-dependent manner. Plays a role in granulosa cell apoptosis by CASP3 activation. Plays a roles as anti-apoptotic protein during neuronal apoptotic process, by negatively regulating poly ADP-ribose polymerase-dependent cell death through regulation of neuronal calcium homeostasis and mitochondrial bioenergetics in response to NMDA excitation. In addition to its role in apoptosis, may regulate trophoblast cell proliferation during the early stages of placental development, by acting on G1/S transition through regulation of CCNE1 expression. May also play a role as an inducer of autophagy by disrupting interaction between MCL1 and BECN1. In terms of biological role, pro-apoptotic molecule exerting its function through the mitochondrial pathway. This is Bcl-2-related ovarian killer protein from Homo sapiens (Human).